A 380-amino-acid chain; its full sequence is Cytochrome b (380 aa).

4 consecutive transmembrane segments (helical) span residues 34–54 (FGSL…LLAM), 78–99 (WLIR…YLHI), 114–134 (WNTG…GYVL), and 179–199 (FFAL…IHLT). Heme b-binding residues include histidine 84 and histidine 98. Heme b-binding residues include histidine 183 and histidine 197. Histidine 202 is an a ubiquinone binding site. The next 4 helical transmembrane spans lie at 227–247 (LKDL…ALFT), 289–309 (LGGV…PFLH), 321–341 (LSQL…WVGS), and 348–368 (FIII…VLLP).

It belongs to the cytochrome b family. As to quaternary structure, the cytochrome bc1 complex contains 11 subunits: 3 respiratory subunits (MT-CYB, CYC1 and UQCRFS1), 2 core proteins (UQCRC1 and UQCRC2) and 6 low-molecular weight proteins (UQCRH/QCR6, UQCRB/QCR7, UQCRQ/QCR8, UQCR10/QCR9, UQCR11/QCR10 and a cleavage product of UQCRFS1). This cytochrome bc1 complex then forms a dimer. The cofactor is heme b.

It is found in the mitochondrion inner membrane. In terms of biological role, component of the ubiquinol-cytochrome c reductase complex (complex III or cytochrome b-c1 complex) that is part of the mitochondrial respiratory chain. The b-c1 complex mediates electron transfer from ubiquinol to cytochrome c. Contributes to the generation of a proton gradient across the mitochondrial membrane that is then used for ATP synthesis. This chain is Cytochrome b (MT-CYB), found in Herpetotheres cachinnans (Laughing falcon).